The sequence spans 635 residues: BTB/POZ domain-containing protein SETH6 (635 aa).

A BTB domain is found at 39 to 104 (SDLTIEVGSA…CYGVGVQYNS (66 aa)). In terms of domain architecture, NPH3 spans 206–494 (DWWGRSLPIL…VQVLFYEQTR (289 aa)). Tyrosine 435 is subject to Phosphotyrosine. Positions 604–635 (QSVASSGKKHTEEKTNSERRFMFQKRRCHSVS) are disordered. Residues 612–624 (KHTEEKTNSERRF) are compositionally biased toward basic and acidic residues. Positions 625-635 (MFQKRRCHSVS) are enriched in basic residues.

This sequence belongs to the NPH3 family.

It functions in the pathway protein modification; protein ubiquitination. Its function is as follows. May act as a substrate-specific adapter of an E3 ubiquitin-protein ligase complex (CUL3-RBX1-BTB) which mediates the ubiquitination and subsequent proteasomal degradation of target proteins. The sequence is that of BTB/POZ domain-containing protein SETH6 (SETH6) from Arabidopsis thaliana (Mouse-ear cress).